A 320-amino-acid chain; its full sequence is MSVGILGAGAFGTALAISLGHTTPVTLWARDAKQAQVMQNTRENTARLPGFALPAGVKVTSNLADLQGCDVLLLAVPAQKLRQFLRGLDQMVAGKTLVTCCKGIELETGMGPVDIAREICPQSEHAILTGPSFANDIAKGLPTALTLACANPDRARQLQQELSNGTLRLYRTSDVIGAQLGGALKNVIAIACGAAIGAQLGESARAALMTRGNAEMQRYAQHKGADASTLSGLSGFGDLVLTCTSELSRNYRFGLALGAGKAFDPATTVEGAATACAVAQEAREKALDMPISSVVAALVENRLDVENAMTKLLSRSLKEE.

The NADPH site is built by Phe11, Arg30, and Lys102. Sn-glycerol 3-phosphate-binding residues include Lys102, Gly130, and Ser132. Ala134 lines the NADPH pocket. Sn-glycerol 3-phosphate is bound by residues Lys185, Asp238, Ser248, Arg249, and Asn250. Residue Lys185 is the Proton acceptor of the active site. Arg249 is an NADPH binding site. Glu270 is a binding site for NADPH.

The protein belongs to the NAD-dependent glycerol-3-phosphate dehydrogenase family.

Its subcellular location is the cytoplasm. The enzyme catalyses sn-glycerol 3-phosphate + NAD(+) = dihydroxyacetone phosphate + NADH + H(+). It carries out the reaction sn-glycerol 3-phosphate + NADP(+) = dihydroxyacetone phosphate + NADPH + H(+). It functions in the pathway membrane lipid metabolism; glycerophospholipid metabolism. Functionally, catalyzes the reduction of the glycolytic intermediate dihydroxyacetone phosphate (DHAP) to sn-glycerol 3-phosphate (G3P), the key precursor for phospholipid synthesis. This chain is Glycerol-3-phosphate dehydrogenase [NAD(P)+], found in Roseobacter denitrificans (strain ATCC 33942 / OCh 114) (Erythrobacter sp. (strain OCh 114)).